Consider the following 358-residue polypeptide: Mesaconyl-CoA hydratase (358 aa).

The protein belongs to the enoyl-CoA hydratase/isomerase family. In terms of assembly, homodimer.

The catalysed reaction is (2R,3S)-beta-methylmalyl-CoA = 2-methylfumaryl-CoA + H2O. With respect to regulation, shows highest activity at 0.5 M KCl. Does not require divalent ions for activity. Its function is as follows. Involved in the methylaspartate cycle. Catalyzes the reversible hydration of mesaconyl-CoA (2-methylfumaryl-CoA) to yield beta-methylmalyl-CoA ((2R,3S)-beta-methylmalyl-CoA). Also shows activity with mesaconyl-C4-CoA (3-methylfumaryl-CoA), (S)-citramalyl-CoA and (S)-malyl-CoA. The polypeptide is Mesaconyl-CoA hydratase (Haloarcula hispanica (strain ATCC 33960 / DSM 4426 / JCM 8911 / NBRC 102182 / NCIMB 2187 / VKM B-1755)).